A 237-amino-acid chain; its full sequence is MTPEDFYMALKELGFDLSQKQKDQFQRYFELLVEWNEKINLTAITDKDEVFLKHFYDSLAPVLQGHIKNQSIQLLDIGAGAGFPSLPIKILCPNLDVTIIDSLNRRITFLNFLSDELGLSGVHFYHGRAEDFGQDKAFRAQFDIVTARAVARMQVLSELTIPFLKVGGQLIALKAAAADQELVDARNALNVLFAKPILNENYKLPNGDGRNITIIDKKKETPNKYPRRAGIPNKKPL.

S-adenosyl-L-methionine contacts are provided by residues G78, F83, 129–130 (AE), and R148.

It belongs to the methyltransferase superfamily. RNA methyltransferase RsmG family.

It is found in the cytoplasm. Its function is as follows. Specifically methylates the N7 position of a guanine in 16S rRNA. This Streptococcus thermophilus (strain ATCC BAA-491 / LMD-9) protein is Ribosomal RNA small subunit methyltransferase G.